The sequence spans 233 residues: Homeobox protein Hox-B6b (233 aa).

The Antp-type hexapeptide motif lies at 136 to 141 (IYPWMQ). Positions 155–214 (GRRGRQTYTRYQTLELEKEFHFNRYLTRRRRIEISHALCLTERQIKIWFQNRRMKWKKEN) form a DNA-binding region, homeobox. The interval 213–233 (ENKLLNPSKTPEEEEEAEKKS) is disordered. Acidic residues predominate over residues 224–233 (EEEEEAEKKS).

It belongs to the Antp homeobox family.

Its subcellular location is the nucleus. Its function is as follows. Sequence-specific transcription factor which is part of a developmental regulatory system that provides cells with specific positional identities on the anterior-posterior axis. The protein is Homeobox protein Hox-B6b (hoxb6b) of Takifugu rubripes (Japanese pufferfish).